The following is a 306-amino-acid chain: Non-homologous end joining protein Ku 2 (306 aa).

A Ku domain is found at 21-206 (ISFGLVNIGV…EVSKQEIDMA (186 aa)). A disordered region spans residues 233 to 306 (LIDAKTKGTK…GSRDKTRKRA (74 aa)). Over residues 274 to 290 (RTSRRKTTASASRRRSS) the composition is skewed to basic residues. Basic and acidic residues predominate over residues 291–300 (SNREKTGSRD).

This sequence belongs to the prokaryotic Ku family. As to quaternary structure, homodimer. Interacts with LigD.

In terms of biological role, with LigD forms a non-homologous end joining (NHEJ) DNA repair enzyme, which repairs dsDNA breaks with reduced fidelity. Binds linear dsDNA with 5'- and 3'- overhangs but not closed circular dsDNA nor ssDNA. Recruits and stimulates the ligase activity of LigD. This chain is Non-homologous end joining protein Ku 2, found in Saccharopolyspora erythraea (strain ATCC 11635 / DSM 40517 / JCM 4748 / NBRC 13426 / NCIMB 8594 / NRRL 2338).